A 501-amino-acid polypeptide reads, in one-letter code: 4,4'-diapophytoene desaturase (4,4'-diaponeurosporene-forming) (501 aa).

5–17 lines the FAD pocket; sequence VVGAGVTGLAAAA.

Belongs to the carotenoid/retinoid oxidoreductase family. CrtN subfamily.

The enzyme catalyses 15-cis-4,4'-diapophytoene + 3 FAD + 3 H(+) = all-trans-4,4'-diaponeurosporene + 3 FADH2. Its pathway is carotenoid biosynthesis; staphyloxanthin biosynthesis; staphyloxanthin from farnesyl diphosphate: step 2/5. Involved in the biosynthesis of the yellow-orange carotenoid staphyloxanthin, which plays a role in the virulence via its protective function against oxidative stress. Catalyzes three successive dehydrogenation reactions that lead to the introduction of three double bonds into 4,4'-diapophytoene (dehydrosqualene), with 4,4'-diapophytofluene and 4,4'-diapo-zeta-carotene as intermediates, and 4,4'-diaponeurosporene (the major deep-yellow pigment in staphylococci strains) as the end product. In Staphylococcus haemolyticus (strain JCSC1435), this protein is 4,4'-diapophytoene desaturase (4,4'-diaponeurosporene-forming).